Consider the following 1884-residue polypeptide: Fatty acid synthase subunit alpha (1884 aa).

The disordered stretch occupies residues 91–141 (TPDPAEPPAAEEPKAETGKESAPAASAAAAAATQPAAAVAPPPQSAGPVES). Residues 111–129 (SAPAASAAAAAATQPAAAV) show a composition bias toward low complexity. The Carrier domain maps to 147–222 (VKASLLIHVL…EQFQDTFSGS (76 aa)). Serine 182 is subject to O-(pantetheine 4'-phosphoryl)serine. The tract at residues 583-613 (TEQTTQDALAIPTGSNTPTEEDELSTASDDD) is disordered. Polar residues predominate over residues 584–600 (EQTTQDALAIPTGSNTP). Residues 601 to 613 (TEEDELSTASDDD) are compositionally biased toward acidic residues. The segment at 677 to 873 (DKYVLVTGAG…CGAIIGWTRG (197 aa)) is beta-ketoacyl reductase. In terms of domain architecture, Ketosynthase family 3 (KS3) spans 1120–1660 (IQEVVIQHDL…QKGAQAVVVH (541 aa)). Residues cysteine 1303, histidine 1545, and histidine 1586 each act as for beta-ketoacyl synthase activity in the active site. Residues aspartate 1770, valine 1771, and glutamate 1772 each contribute to the Mg(2+) site. Residues 1770–1772 (DVE), tyrosine 1796, serine 1806, 1815–1825 (EATFKALGVSS), 1839–1842 (RDGN), and 1869–1871 (ISH) contribute to the acetyl-CoA site. Serine 1870 and histidine 1871 together coordinate Mg(2+).

This sequence belongs to the thiolase-like superfamily. Fungal fatty acid synthetase subunit alpha family. As to quaternary structure, fatty acid synthase is composed of alpha and beta subunits.

It carries out the reaction acetyl-CoA + n malonyl-CoA + 2n NADPH + 4n H(+) = a long-chain-acyl-CoA + n CoA + n CO2 + 2n NADP(+).. The enzyme catalyses a fatty acyl-[ACP] + malonyl-[ACP] + H(+) = a 3-oxoacyl-[ACP] + holo-[ACP] + CO2. It catalyses the reaction a (3R)-hydroxyacyl-[ACP] + NADP(+) = a 3-oxoacyl-[ACP] + NADPH + H(+). Its function is as follows. Fatty acid synthetase catalyzes the formation of long-chain fatty acids from acetyl-CoA, malonyl-CoA and NADPH. The alpha subunit contains domains for: acyl carrier protein, 3-oxoacyl-[acyl-carrier-protein] reductase, and 3-oxoacyl-[acyl-carrier-protein] synthase. In Candida parapsilosis (strain CDC 317 / ATCC MYA-4646) (Yeast), this protein is Fatty acid synthase subunit alpha (FAS2).